A 227-amino-acid chain; its full sequence is MATWSNFNLQNSASPLMEQIIFFHDHTLVILIMITILVGYLMISLFFNSYINRFLLEGQMIELIWTILPAITLIFIALPSLRLLYLLDELNNPLITLKSIGHQWYWSYEYSDFKNIQFDSYMIPINEMKNDNFRLLDVDNRIVLPMNNQIRILVTATDVIHSWTIPSLGVKVDANPGRLNQTNFFINRPGIFYGQCSEICGANHSFMPIVIESISIKNFINWINNYS.

Over 1-26 (MATWSNFNLQNSASPLMEQIIFFHDH) the chain is Mitochondrial intermembrane. A helical membrane pass occupies residues 27–51 (TLVILIMITILVGYLMISLFFNSYI). Residues 52–62 (NRFLLEGQMIE) lie on the Mitochondrial matrix side of the membrane. A helical membrane pass occupies residues 63-81 (LIWTILPAITLIFIALPSL). At 82–227 (RLLYLLDELN…NFINWINNYS (146 aa)) the chain is on the mitochondrial intermembrane side. Cu cation-binding residues include His-161, Cys-196, Glu-198, Cys-200, His-204, and Met-207. A Mg(2+)-binding site is contributed by Glu-198.

Belongs to the cytochrome c oxidase subunit 2 family. As to quaternary structure, component of the cytochrome c oxidase (complex IV, CIV), a multisubunit enzyme composed of a catalytic core of 3 subunits and several supernumerary subunits. The complex exists as a monomer or a dimer and forms supercomplexes (SCs) in the inner mitochondrial membrane with ubiquinol-cytochrome c oxidoreductase (cytochrome b-c1 complex, complex III, CIII). Cu cation serves as cofactor.

It localises to the mitochondrion inner membrane. It catalyses the reaction 4 Fe(II)-[cytochrome c] + O2 + 8 H(+)(in) = 4 Fe(III)-[cytochrome c] + 2 H2O + 4 H(+)(out). Component of the cytochrome c oxidase, the last enzyme in the mitochondrial electron transport chain which drives oxidative phosphorylation. The respiratory chain contains 3 multisubunit complexes succinate dehydrogenase (complex II, CII), ubiquinol-cytochrome c oxidoreductase (cytochrome b-c1 complex, complex III, CIII) and cytochrome c oxidase (complex IV, CIV), that cooperate to transfer electrons derived from NADH and succinate to molecular oxygen, creating an electrochemical gradient over the inner membrane that drives transmembrane transport and the ATP synthase. Cytochrome c oxidase is the component of the respiratory chain that catalyzes the reduction of oxygen to water. Electrons originating from reduced cytochrome c in the intermembrane space (IMS) are transferred via the dinuclear copper A center (CU(A)) of subunit 2 and heme A of subunit 1 to the active site in subunit 1, a binuclear center (BNC) formed by heme A3 and copper B (CU(B)). The BNC reduces molecular oxygen to 2 water molecules using 4 electrons from cytochrome c in the IMS and 4 protons from the mitochondrial matrix. This Choristoneura rosaceana (Oblique banded leafroller) protein is Cytochrome c oxidase subunit 2 (COII).